The primary structure comprises 392 residues: Succinyl-diaminopimelate desuccinylase (392 aa).

Residue His76 coordinates Zn(2+). Residue Asp78 is part of the active site. Residue Asp107 coordinates Zn(2+). Residue Glu143 is the Proton acceptor of the active site. Zn(2+) contacts are provided by Glu144, Glu172, and His357.

This sequence belongs to the peptidase M20A family. DapE subfamily. Homodimer. Zn(2+) is required as a cofactor. Requires Co(2+) as cofactor.

It carries out the reaction N-succinyl-(2S,6S)-2,6-diaminopimelate + H2O = (2S,6S)-2,6-diaminopimelate + succinate. Its pathway is amino-acid biosynthesis; L-lysine biosynthesis via DAP pathway; LL-2,6-diaminopimelate from (S)-tetrahydrodipicolinate (succinylase route): step 3/3. Catalyzes the hydrolysis of N-succinyl-L,L-diaminopimelic acid (SDAP), forming succinate and LL-2,6-diaminopimelate (DAP), an intermediate involved in the bacterial biosynthesis of lysine and meso-diaminopimelic acid, an essential component of bacterial cell walls. This is Succinyl-diaminopimelate desuccinylase from Helicobacter hepaticus (strain ATCC 51449 / 3B1).